Reading from the N-terminus, the 118-residue chain is Succinate dehydrogenase assembly factor 4, mitochondrial (118 aa).

Residues 1-30 (MQSVTRQTARVLPQMGKQVSYLSTSGAWRA) constitute a mitochondrion transit peptide. Residues 65 to 118 (GKLDEFSRHPYQEKEPLKPWPNQTNPYTGEIGGPAGPEPTRYGDWERKGRVSDF) are disordered. Composition is skewed to basic and acidic residues over residues 66 to 81 (KLDE…KEPL) and 105 to 118 (RYGD…VSDF).

The protein belongs to the SDHAF4 family. Interacts with SdhA in its FAD-bound form.

Its subcellular location is the mitochondrion matrix. Plays an essential role in the assembly of succinate dehydrogenase (SDH), an enzyme complex (also referred to as respiratory complex II) that is a component of both the tricarboxylic acid (TCA) cycle and the mitochondrial electron transport chain, and which couples the oxidation of succinate to fumarate with the reduction of ubiquinone (coenzyme Q) to ubiquinol. Binds to the flavoprotein subunit SdhA in its FAD-bound form, blocking the generation of excess reactive oxygen species (ROS) and facilitating its assembly with the iron-sulfur protein subunit SdhB into the SDH catalytic dimer. The polypeptide is Succinate dehydrogenase assembly factor 4, mitochondrial (Drosophila melanogaster (Fruit fly)).